Reading from the N-terminus, the 341-residue chain is Probable GDP-mannose transporter 2 (341 aa).

The Cytoplasmic segment spans residues 1–11 (MSKHKHEWTES). The helical transmembrane segment at 12 to 32 (VANSGPASILSYCASSILMTV) threads the bilayer. Residues 33 to 46 (TNKFVVNLDNFNMN) lie on the Lumenal side of the membrane. Residues 47–67 (FVMLFVQSLVCTVTLCILRIV) form a helical membrane-spanning segment. Topologically, residues 68–85 (GVANFRSLNRTDVKNWFP) are cytoplasmic. A helical membrane pass occupies residues 86–106 (ISLLLVLMIYTSLKSLQYLAV). A topological domain (lumenal) is located at residue Pro-107. Residues 108 to 128 (IYTIFKNLTIILIAYGEVLFF) traverse the membrane as a helical segment. Residues 129 to 139 (GGKVTSMELTS) are Cytoplasmic-facing. Residues 140–160 (FIMMVLSSVVATWGDQQAIAI) form a helical membrane-spanning segment. Topologically, residues 161 to 176 (KASSLEDLDQELVEST) are lumenal. The helical transmembrane segment at 177-197 (IFVLNPGYLWMFTNCISSALF) threads the bilayer. The Cytoplasmic segment spans residues 198-214 (VLIMRKRIRLTNFKDYD). Residues 215–235 (TMFYNNVLALPLLLVFSFIME) traverse the membrane as a helical segment. Over 236 to 251 (DWSTKNLSVNLSADSL) the chain is Lumenal. Asn-241 and Asn-245 each carry an N-linked (GlcNAc...) asparagine glycan. The chain crosses the membrane as a helical span at residues 252–272 (AAMVISGLMSVGISYCSGWCV). At 273–278 (RVTSST) the chain is on the cytoplasmic side. The chain crosses the membrane as a helical span at residues 279-299 (TYSMVGALNKLPIALAGLVFF). The Lumenal portion of the chain corresponds to 300–303 (DAPK). Residues 304–324 (NFLSFFSIFLGFLSGLLYAVA) form a helical membrane-spanning segment. The Cytoplasmic segment spans residues 325–341 (KQKKIQQQKVLAATLEK).

Belongs to the TPT transporter family. SLC35D subfamily.

It localises to the golgi apparatus membrane. The protein localises to the cytoplasmic vesicle membrane. The protein resides in the endoplasmic reticulum membrane. In terms of biological role, involved in the import of GDP-mannose from the cytoplasm into the Golgi lumen. The chain is Probable GDP-mannose transporter 2 (HVG1) from Saccharomyces cerevisiae (strain Lalvin EC1118 / Prise de mousse) (Baker's yeast).